A 421-amino-acid polypeptide reads, in one-letter code: MQLLNFGLLLLPFVAGDLAPQPEPLLAGPSDVVPGQYIVTLKEGLTSAQIRDHKKWVSSVHRANLDSFAAGASGVETEGIMKHFHIHDLNMYSGGFDEKTVEDLSRNPYVKSVHPDQHVYLAKTVTQRQARWGLGYMSSKGKPVPLHSTLVDYSYDDKAGEGVWAYVLDTGINVNHIEFEGRAILGHNAIPNKPHTDEFGHGTYVAGIIAGKTYGVAKKANVVSAKAFDTGSSTYNYILETYDWIVRNITDSNRKNKAVINLSISGAKYQPFDDAVEKAFKAGITTVVAAGNDGKDAKNNTPASSPNAITVGAVRWENTRPSFSNYGKLVDIWAPGELIKSCWKGGNNATSTQSGTSAASPHVAGLVAYLMSIENLPSPSAVTARVLNLTIPNLVKDAKDSPNRVAYNGIQERKFTLPKYY.

The signal sequence occupies residues 1–16; it reads MQLLNFGLLLLPFVAG. Residues 17 to 122 constitute a propeptide that is removed on maturation; sequence DLAPQPEPLL…VHPDQHVYLA (106 aa). The Inhibitor I9 domain occupies 36 to 122; sequence QYIVTLKEGL…VHPDQHVYLA (87 aa). Positions 131-421 constitute a Peptidase S8 domain; sequence RWGLGYMSSK…ERKFTLPKYY (291 aa). Residues D169 and H201 each act as charge relay system in the active site. 3 N-linked (GlcNAc...) asparagine glycosylation sites follow: N248, N261, and N348. The Charge relay system role is filled by S357. N-linked (GlcNAc...) asparagine glycosylation is present at N388.

This sequence belongs to the peptidase S8 family.

The protein resides in the secreted. Secreted subtilisin-like serine protease with keratinolytic activity that contributes to pathogenicity. In Trichophyton verrucosum (strain HKI 0517), this protein is Subtilisin-like protease 2 (SUB2).